We begin with the raw amino-acid sequence, 60 residues long: Ribosome biogenesis protein Nop10 (60 aa).

Residues 29–60 are disordered; sequence CDGPTENSAPAPFSPEDPYGEYRRRVRRRASE.

Belongs to the NOP10 family.

Involved in ribosome biogenesis; more specifically in 18S rRNA pseudouridylation and in cleavage of pre-rRNA. The chain is Ribosome biogenesis protein Nop10 from Halorubrum lacusprofundi (strain ATCC 49239 / DSM 5036 / JCM 8891 / ACAM 34).